We begin with the raw amino-acid sequence, 196 residues long: Interleukin-18 (196 aa).

The propeptide occupies Met1–Phe29.

The protein belongs to the IL-1 family. In terms of assembly, forms a ternary complex with ligand-binding receptor subunit IL18R1 and signaling receptor subunit IL18RAP at the plasma membrane. Mature IL18 first binds to IL18R1 forming a low affinity binary complex, which then interacts with IL18RAP to form a high affinity ternary complex that signals inside the cell. Interacts with cargo receptor TMED10; the interaction mediates the translocation from the cytoplasm into the ERGIC (endoplasmic reticulum-Golgi intermediate compartment) and thereby secretion. The pro-IL-18 precursor is processed by CASP1 or CASP4 to yield the active form.

Its subcellular location is the cytoplasm. The protein localises to the secreted. Augments natural killer cell activity in spleen cells and stimulates interferon gamma production in T-helper type I cells. Involved in transduction of inflammation downstream of pyroptosis: its mature form is specifically released in the extracellular milieu by passing through the gasdermin-D (GSDMD) pore. The sequence is that of Interleukin-18 (IL18) from Gallus gallus (Chicken).